Here is a 344-residue protein sequence, read N- to C-terminus: Small neutral protease regulatory protein (344 aa).

Positions 1–60 (MELEVRHLRALCAIADAGSLHRAARRLGVAQPTLSTQLTRIEQALGGPLFTRERTGCRPT) constitute an HTH lysR-type domain. Positions 20–39 (LHRAARRLGVAQPTLSTQLT) form a DNA-binding region, H-T-H motif. The segment at 322-344 (SCGRAEGSRSRRPRDVAPPRPIG) is disordered. Residues 327-338 (EGSRSRRPRDVA) are compositionally biased toward basic and acidic residues.

The protein belongs to the LysR transcriptional regulatory family.

Its function is as follows. Transcriptional activator of the gene (snpA) for the small neutral protease. The chain is Small neutral protease regulatory protein (mprR) from Streptomyces lividans.